The following is a 219-amino-acid chain: uncharacterized protein (219 aa).

This is an uncharacterized protein from Treponema pallidum (strain Nichols).